The chain runs to 246 residues: Carbonic anhydrase (246 aa).

Residues 1–22 form the signal peptide; it reads MKTSLGKAALLALSMMPVTVFA. Positions 23–246 constitute an Alpha-carbonic anhydrase domain; sequence SHWSYEGEGS…QPLNGRVVIE (224 aa). The cysteines at positions 46 and 201 are disulfide-linked. H84 acts as the Proton acceptor in catalysis. Positions 111, 113, and 130 each coordinate Zn(2+). Position 197 to 198 (197 to 198) interacts with substrate; that stretch reads TT.

This sequence belongs to the alpha-carbonic anhydrase family. Zn(2+) serves as cofactor.

The protein resides in the periplasm. The enzyme catalyses hydrogencarbonate + H(+) = CO2 + H2O. In terms of biological role, reversible hydration of carbon dioxide. The chain is Carbonic anhydrase (cah) from Klebsiella pneumoniae.